A 138-amino-acid polypeptide reads, in one-letter code: Putative pre-16S rRNA nuclease (138 aa).

The protein belongs to the YqgF nuclease family.

Its subcellular location is the cytoplasm. Its function is as follows. Could be a nuclease involved in processing of the 5'-end of pre-16S rRNA. The protein is Putative pre-16S rRNA nuclease of Listeria monocytogenes serotype 4b (strain CLIP80459).